Consider the following 90-residue polypeptide: Hemoglobin subunit alpha-1 (90 aa).

Positions 1–90 (VLTDDDKNHV…SKLSDLHAEK (90 aa)) constitute a Globin domain.

Belongs to the globin family. In terms of assembly, heterotetramer of two alpha chains and two beta chains. In terms of tissue distribution, red blood cells.

Involved in oxygen transport from the lung to the various peripheral tissues. This is Hemoglobin subunit alpha-1 from Saara hardwickii (Indian spiny-tailed lizard).